Consider the following 86-residue polypeptide: Protein Tat (86 aa).

Residues 1-21 (MDPVDPNLEPWNHPGSQPKTA) form a disordered region. The interaction with human CREBBP stretch occupies residues 1–24 (MDPVDPNLEPWNHPGSQPKTACNR). Residues 1–48 (MDPVDPNLEPWNHPGSQPKTACNRCHCKKCCYHCQVCFITKGLGISYG) form a transactivation region. Zn(2+) is bound by residues Cys-22, Cys-25, and Cys-27. The segment at 22–37 (CNRCHCKKCCYHCQVC) is cysteine-rich. Lys-28 carries the post-translational modification N6-acetyllysine; by host PCAF. Residues Cys-30, His-33, Cys-34, and Cys-37 each contribute to the Zn(2+) site. Positions 38-48 (FITKGLGISYG) are core. The disordered stretch occupies residues 47 to 86 (YGRKKRRQRRRPSQGGQTHQDPIPKQPSSQPRGNPTGPKE). Over residues 48-58 (GRKKRRQRRRP) the composition is skewed to basic residues. The short motif at 49–57 (RKKRRQRRR) is the Nuclear localization signal, RNA-binding (TAR), and protein transduction element. Residues 49–86 (RKKRRQRRRPSQGGQTHQDPIPKQPSSQPRGNPTGPKE) are interaction with the host capping enzyme RNGTT. N6-acetyllysine; by host EP300 and GCN5L2 is present on residues Lys-50 and Lys-51. Asymmetric dimethylarginine; by host PRMT6 is present on residues Arg-52 and Arg-53. Residues 60–79 (QGGQTHQDPIPKQPSSQPRG) are compositionally biased toward polar residues. Residue Lys-71 forms a Glycyl lysine isopeptide (Lys-Gly) (interchain with G-Cter in ubiquitin) linkage.

Belongs to the lentiviruses Tat family. Interacts with host CCNT1. Associates with the P-TEFb complex composed at least of Tat, P-TEFb (CDK9 and CCNT1), TAR RNA, RNA Pol II. Recruits the HATs CREBBP, TAF1/TFIID, EP300, PCAF and GCN5L2. Interacts with host KAT5/Tip60; this interaction targets the latter to degradation. Interacts with the host deacetylase SIRT1. Interacts with host capping enzyme RNGTT; this interaction stimulates RNGTT. Binds to host KDR, and to the host integrins ITGAV/ITGB3 and ITGA5/ITGB1. Interacts with host KPNB1/importin beta-1 without previous binding to KPNA1/importin alpha-1. Interacts with EIF2AK2. Interacts with host nucleosome assembly protein NAP1L1; this interaction may be required for the transport of Tat within the nucleus, since the two proteins interact at the nuclear rim. Interacts with host C1QBP/SF2P32; this interaction involves lysine-acetylated Tat. Interacts with the host chemokine receptors CCR2, CCR3 and CXCR4. Interacts with host DPP4/CD26; this interaction may trigger an anti-proliferative effect. Interacts with host LDLR. Interacts with the host extracellular matrix metalloproteinase MMP1. Interacts with host PRMT6; this interaction mediates Tat's methylation. Interacts with, and is ubiquitinated by MDM2/Hdm2. Interacts with host PSMC3 and HTATIP2. Interacts with STAB1; this interaction may overcome SATB1-mediated repression of IL2 and IL2RA (interleukin) in T cells by binding to the same domain than HDAC1. Interacts (when acetylated) with human CDK13, thereby increasing HIV-1 mRNA splicing and promoting the production of the doubly spliced HIV-1 protein Nef. Interacts with host TBP; this interaction modulates the activity of transcriptional pre-initiation complex. Interacts with host RELA. Interacts with host PLSCR1; this interaction negatively regulates Tat transactivation activity by altering its subcellular distribution. In terms of processing, asymmetrical arginine methylation by host PRMT6 seems to diminish the transactivation capacity of Tat and affects the interaction with host CCNT1. Post-translationally, acetylation by EP300, CREBBP, GCN5L2/GCN5 and PCAF regulates the transactivation activity of Tat. EP300-mediated acetylation of Lys-50 promotes dissociation of Tat from the TAR RNA through the competitive binding to PCAF's bromodomain. In addition, the non-acetylated Tat's N-terminus can also interact with PCAF. PCAF-mediated acetylation of Lys-28 enhances Tat's binding to CCNT1. Lys-50 is deacetylated by SIRT1. Polyubiquitination by host MDM2 does not target Tat to degradation, but activates its transactivation function and fosters interaction with CCNT1 and TAR RNA. In terms of processing, phosphorylated by EIF2AK2 on serine and threonine residues adjacent to the basic region important for TAR RNA binding and function. Phosphorylation of Tat by EIF2AK2 is dependent on the prior activation of EIF2AK2 by dsRNA.

The protein resides in the host nucleus. It localises to the host nucleolus. Its subcellular location is the host cytoplasm. It is found in the secreted. Functionally, transcriptional activator that increases RNA Pol II processivity, thereby increasing the level of full-length viral transcripts. Recognizes a hairpin structure at the 5'-LTR of the nascent viral mRNAs referred to as the transactivation responsive RNA element (TAR) and recruits the cyclin T1-CDK9 complex (P-TEFb complex) that will in turn hyperphosphorylate the RNA polymerase II to allow efficient elongation. The CDK9 component of P-TEFb and other Tat-activated kinases hyperphosphorylate the C-terminus of RNA Pol II that becomes stabilized and much more processive. Other factors such as HTATSF1/Tat-SF1, SUPT5H/SPT5, and HTATIP2 are also important for Tat's function. Besides its effect on RNA Pol II processivity, Tat induces chromatin remodeling of proviral genes by recruiting the histone acetyltransferases (HATs) CREBBP, EP300 and PCAF to the chromatin. This also contributes to the increase in proviral transcription rate, especially when the provirus integrates in transcriptionally silent region of the host genome. To ensure maximal activation of the LTR, Tat mediates nuclear translocation of NF-kappa-B by interacting with host RELA. Through its interaction with host TBP, Tat may also modulate transcription initiation. Tat can reactivate a latently infected cell by penetrating in it and transactivating its LTR promoter. In the cytoplasm, Tat is thought to act as a translational activator of HIV-1 mRNAs. Its function is as follows. Extracellular circulating Tat can be endocytosed by surrounding uninfected cells via the binding to several surface receptors such as CD26, CXCR4, heparan sulfate proteoglycans (HSPG) or LDLR. Neurons are rarely infected, but they internalize Tat via their LDLR. Through its interaction with nuclear HATs, Tat is potentially able to control the acetylation-dependent cellular gene expression. Modulates the expression of many cellular genes involved in cell survival, proliferation or in coding for cytokines or cytokine receptors. Tat plays a role in T-cell and neurons apoptosis. Tat induced neurotoxicity and apoptosis probably contribute to neuroAIDS. Circulating Tat also acts as a chemokine-like and/or growth factor-like molecule that binds to specific receptors on the surface of the cells, affecting many cellular pathways. In the vascular system, Tat binds to ITGAV/ITGB3 and ITGA5/ITGB1 integrins dimers at the surface of endothelial cells and competes with bFGF for heparin-binding sites, leading to an excess of soluble bFGF. The protein is Protein Tat of Homo sapiens (Human).